The sequence spans 253 residues: Chloride intracellular channel protein 4 (253 aa).

N-acetylalanine is present on Ala-2. A required for insertion into the membrane region spans residues 2–101; that stretch reads ALSMPLNGLK…EEFLEEVLCP (100 aa). Residue Ser-4 is modified to Phosphoserine. Position 24 is an N6-acetyllysine (Lys-24). Residues 35-38 carry the G-site motif; it reads CPFS. The helical transmembrane segment at 37–57 threads the bilayer; the sequence is FSQRLFMILWLKGVVFSVTTV. The region spanning 81–244 is the GST C-terminal domain; it reads NSEVKTDVNK…PSDKEVEIAY (164 aa). Residue Lys-130 is modified to N6-acetyllysine. Phosphoserine is present on residues Ser-132, Ser-167, and Ser-236. At Tyr-244 the chain carries Phosphotyrosine.

This sequence belongs to the chloride channel CLIC family. In terms of assembly, monomer. Interacts with HRH3. As to expression, detected in brain, in cell bodies and dendrites of Purkinje cells in cerebellar neurons (at protein level). Expressed neonatal and adult cardiomyocytes (at protein level). Marked expression was found in hippocampus and cerebellum, and in many other tissues.

The protein resides in the cytoplasm. It localises to the cytoskeleton. Its subcellular location is the microtubule organizing center. It is found in the centrosome. The protein localises to the cytoplasmic vesicle membrane. The protein resides in the nucleus. It localises to the cell membrane. Its subcellular location is the mitochondrion. It is found in the cell junction. The protein localises to the endoplasmic reticulum membrane. It carries out the reaction chloride(in) = chloride(out). The enzyme catalyses thiocyanate(in) = thiocyanate(out). The catalysed reaction is nitrate(in) = nitrate(out). It catalyses the reaction iodide(out) = iodide(in). It carries out the reaction bromide(in) = bromide(out). The enzyme catalyses fluoride(in) = fluoride(out). The catalysed reaction is choline(out) = choline(in). With respect to regulation, channel activity is redox- and pH-regulated. Anion vs cation selectivity is enhanced when fully oxidized. Its function is as follows. In the soluble state, catalyzes glutaredoxin-like thiol disulfide exchange reactions with reduced glutathione as electron donor. Can insert into membranes and form voltage-dependent multi-ion conductive channels. Membrane insertion seems to be redox-regulated and may occur only under oxidizing conditions. Has alternate cellular functions like a potential role in angiogenesis or in maintaining apical-basolateral membrane polarity during mitosis and cytokinesis. Could also promote endothelial cell proliferation and regulate endothelial morphogenesis (tubulogenesis). Promotes cell-surface expression of HRH3. This chain is Chloride intracellular channel protein 4 (Clic4), found in Rattus norvegicus (Rat).